The primary structure comprises 240 residues: Probable peptide export permease protein YydJ (240 aa).

The next 6 helical transmembrane spans lie at 13–33 (VIII…FLLV), 50–70 (SYTV…AFFI), 97–117 (IAVL…IISL), 126–146 (ALLL…IGTI), 153–173 (ILIS…LVAI), and 210–230 (VLFI…VLRF).

As to quaternary structure, the complex is composed of 2 ATP-binding proteins (YydI), two transmembrane proteins (YydJ).

The protein resides in the cell membrane. Its function is as follows. Suggested to be part of an ABC transporter complex YydIJ involved in export of the modified peptide YydF. The chain is Probable peptide export permease protein YydJ (yydJ) from Bacillus subtilis (strain 168).